A 341-amino-acid chain; its full sequence is Anthranilate phosphoribosyltransferase (341 aa).

5-phospho-alpha-D-ribose 1-diphosphate-binding positions include glycine 79, 82–83 (GD), threonine 87, 89–92 (NIST), 107–115 (KHGNRAVSS), and serine 119. Glycine 79 is an anthranilate binding site. Residue serine 91 participates in Mg(2+) binding. Asparagine 110 is an anthranilate binding site. Arginine 165 contributes to the anthranilate binding site. Residues aspartate 224 and glutamate 225 each coordinate Mg(2+).

Belongs to the anthranilate phosphoribosyltransferase family. As to quaternary structure, homodimer. Requires Mg(2+) as cofactor.

The catalysed reaction is N-(5-phospho-beta-D-ribosyl)anthranilate + diphosphate = 5-phospho-alpha-D-ribose 1-diphosphate + anthranilate. It functions in the pathway amino-acid biosynthesis; L-tryptophan biosynthesis; L-tryptophan from chorismate: step 2/5. Functionally, catalyzes the transfer of the phosphoribosyl group of 5-phosphorylribose-1-pyrophosphate (PRPP) to anthranilate to yield N-(5'-phosphoribosyl)-anthranilate (PRA). The chain is Anthranilate phosphoribosyltransferase from Bacillus mycoides (strain KBAB4) (Bacillus weihenstephanensis).